A 445-amino-acid chain; its full sequence is Argininosuccinate synthase (445 aa).

ATP contacts are provided by residues 17–25 (AFSGGLDTS) and Ala43. Tyr99 serves as a coordination point for L-citrulline. 2 residues coordinate ATP: Gly129 and Thr131. L-aspartate is bound by residues Thr131, Asn135, and Asp136. Asn135 contributes to the L-citrulline binding site. Residue Asp136 participates in ATP binding. Positions 139 and 192 each coordinate L-citrulline. Asp194 is a binding site for ATP. Positions 201, 203, and 280 each coordinate L-citrulline.

The protein belongs to the argininosuccinate synthase family. Type 2 subfamily. As to quaternary structure, homotetramer.

Its subcellular location is the cytoplasm. It catalyses the reaction L-citrulline + L-aspartate + ATP = 2-(N(omega)-L-arginino)succinate + AMP + diphosphate + H(+). It functions in the pathway amino-acid biosynthesis; L-arginine biosynthesis; L-arginine from L-ornithine and carbamoyl phosphate: step 2/3. This Burkholderia cenocepacia (strain ATCC BAA-245 / DSM 16553 / LMG 16656 / NCTC 13227 / J2315 / CF5610) (Burkholderia cepacia (strain J2315)) protein is Argininosuccinate synthase.